We begin with the raw amino-acid sequence, 258 residues long: Phosphate import ATP-binding protein PstB 1 (258 aa).

The 243-residue stretch at 5 to 247 (LDLTDVNIYY…EKIFSNPNQK (243 aa)) folds into the ABC transporter domain. 37-44 (GPSGCGKT) serves as a coordination point for ATP.

Belongs to the ABC transporter superfamily. Phosphate importer (TC 3.A.1.7) family. The complex is composed of two ATP-binding proteins (PstB), two transmembrane proteins (PstC and PstA) and a solute-binding protein (PstS).

It localises to the cell membrane. The enzyme catalyses phosphate(out) + ATP + H2O = ADP + 2 phosphate(in) + H(+). Part of the ABC transporter complex PstSACB involved in phosphate import. Responsible for energy coupling to the transport system. In Mycobacterium tuberculosis (strain CDC 1551 / Oshkosh), this protein is Phosphate import ATP-binding protein PstB 1.